Consider the following 337-residue polypeptide: Pyridoxal 5'-phosphate synthase subunit PdxS (337 aa).

D65 is a binding site for D-ribose 5-phosphate. The active-site Schiff-base intermediate with D-ribose 5-phosphate is K122. G194 is a binding site for D-ribose 5-phosphate. K206 contributes to the D-glyceraldehyde 3-phosphate binding site. D-ribose 5-phosphate contacts are provided by residues G255 and 276 to 277 (GS).

The protein belongs to the PdxS/SNZ family. In the presence of PdxT, forms a dodecamer of heterodimers.

It catalyses the reaction aldehydo-D-ribose 5-phosphate + D-glyceraldehyde 3-phosphate + L-glutamine = pyridoxal 5'-phosphate + L-glutamate + phosphate + 3 H2O + H(+). Its pathway is cofactor biosynthesis; pyridoxal 5'-phosphate biosynthesis. In terms of biological role, catalyzes the formation of pyridoxal 5'-phosphate from ribose 5-phosphate (RBP), glyceraldehyde 3-phosphate (G3P) and ammonia. The ammonia is provided by the PdxT subunit. Can also use ribulose 5-phosphate and dihydroxyacetone phosphate as substrates, resulting from enzyme-catalyzed isomerization of RBP and G3P, respectively. The chain is Pyridoxal 5'-phosphate synthase subunit PdxS from Metallosphaera sedula (strain ATCC 51363 / DSM 5348 / JCM 9185 / NBRC 15509 / TH2).